Consider the following 33-residue polypeptide: Dermonecrotic toxin LbSicTox-alphaIB1b (33 aa).

His-11 is an active-site residue. The Mg(2+) site is built by Glu-31 and Asp-33.

It belongs to the arthropod phospholipase D family. Class II subfamily. It depends on Mg(2+) as a cofactor. In terms of processing, contains 2 disulfide bonds. Expressed by the venom gland.

It is found in the secreted. It carries out the reaction an N-(acyl)-sphingosylphosphocholine = an N-(acyl)-sphingosyl-1,3-cyclic phosphate + choline. It catalyses the reaction an N-(acyl)-sphingosylphosphoethanolamine = an N-(acyl)-sphingosyl-1,3-cyclic phosphate + ethanolamine. The enzyme catalyses a 1-acyl-sn-glycero-3-phosphocholine = a 1-acyl-sn-glycero-2,3-cyclic phosphate + choline. The catalysed reaction is a 1-acyl-sn-glycero-3-phosphoethanolamine = a 1-acyl-sn-glycero-2,3-cyclic phosphate + ethanolamine. Functionally, dermonecrotic toxins cleave the phosphodiester linkage between the phosphate and headgroup of certain phospholipids (sphingolipid and lysolipid substrates), forming an alcohol (often choline) and a cyclic phosphate. This toxin acts on sphingomyelin (SM) with high activity (9.5 U/mg). It may also act on ceramide phosphoethanolamine (CPE), lysophosphatidylcholine (LPC) and lysophosphatidylethanolamine (LPE), but not on lysophosphatidylserine (LPS), and lysophosphatidylglycerol (LPG). It acts by transphosphatidylation, releasing exclusively cyclic phosphate products as second products. Induces dermonecrosis, hemolysis, increased vascular permeability, edema, inflammatory response, and platelet aggregation. This chain is Dermonecrotic toxin LbSicTox-alphaIB1b, found in Loxosceles boneti (North American fiddleback spider).